The sequence spans 208 residues: Flavin-dependent thymidylate synthase (208 aa).

The ThyX domain maps to 1–208 (MEVICKHYTP…QYLFEDCLKH (208 aa)). FAD contacts are provided by residues Ser-50 and 74–76 (RHR). DUMP contacts are provided by residues 71–74 (ELSR), 84–86 (SSR), and Lys-147. A ThyX motif motif is present at residues 74 to 84 (RHRIASLSVKS). FAD-binding positions include 163-165 (NAR) and Asn-169. Arg-174 contacts dUMP. Arg-174 serves as the catalytic Involved in ionization of N3 of dUMP, leading to its activation.

Belongs to the thymidylate synthase ThyX family. As to quaternary structure, homotetramer. Requires FAD as cofactor.

It catalyses the reaction dUMP + (6R)-5,10-methylene-5,6,7,8-tetrahydrofolate + NADPH + H(+) = dTMP + (6S)-5,6,7,8-tetrahydrofolate + NADP(+). It participates in pyrimidine metabolism; dTTP biosynthesis. Its function is as follows. Catalyzes the reductive methylation of 2'-deoxyuridine-5'-monophosphate (dUMP) to 2'-deoxythymidine-5'-monophosphate (dTMP) while utilizing 5,10-methylenetetrahydrofolate (mTHF) as the methyl donor, and NAD(P)H and FADH(2) as the reductant. This is Flavin-dependent thymidylate synthase from Helicobacter pylori (strain ATCC 700392 / 26695) (Campylobacter pylori).